We begin with the raw amino-acid sequence, 198 residues long: ATP synthase subunit b (198 aa).

Residues 25-45 traverse the membrane as a helical segment; that stretch reads PLSELLIGTLAFGLLVAFFFW.

The protein belongs to the ATPase B chain family. F-type ATPases have 2 components, F(1) - the catalytic core - and F(0) - the membrane proton channel. F(1) has five subunits: alpha(3), beta(3), gamma(1), delta(1), epsilon(1). F(0) has three main subunits: a(1), b(2) and c(10-14). The alpha and beta chains form an alternating ring which encloses part of the gamma chain. F(1) is attached to F(0) by a central stalk formed by the gamma and epsilon chains, while a peripheral stalk is formed by the delta and b chains.

Its subcellular location is the cell membrane. Its function is as follows. F(1)F(0) ATP synthase produces ATP from ADP in the presence of a proton or sodium gradient. F-type ATPases consist of two structural domains, F(1) containing the extramembraneous catalytic core and F(0) containing the membrane proton channel, linked together by a central stalk and a peripheral stalk. During catalysis, ATP synthesis in the catalytic domain of F(1) is coupled via a rotary mechanism of the central stalk subunits to proton translocation. Component of the F(0) channel, it forms part of the peripheral stalk, linking F(1) to F(0). This is ATP synthase subunit b from Frankia alni (strain DSM 45986 / CECT 9034 / ACN14a).